Consider the following 252-residue polypeptide: LexA repressor (252 aa).

The interval 1–46 (MPEENRGGHQPYTEESSVSALHPVRTDDSVGSSAEQTGDAPTLTER) is disordered. A DNA-binding region (H-T-H motif) is located at residues 67–87 (IREIGEAVGLSSPSSVAHQLK). Active-site for autocatalytic cleavage activity residues include S176 and K213.

The protein belongs to the peptidase S24 family. In terms of assembly, homodimer.

It carries out the reaction Hydrolysis of Ala-|-Gly bond in repressor LexA.. Functionally, represses a number of genes involved in the response to DNA damage (SOS response), including recA and lexA. In the presence of single-stranded DNA, RecA interacts with LexA causing an autocatalytic cleavage which disrupts the DNA-binding part of LexA, leading to derepression of the SOS regulon and eventually DNA repair. This Thermobifida fusca (strain YX) protein is LexA repressor.